The primary structure comprises 506 residues: Glutamate--tRNA ligase (506 aa).

The short motif at 9–19 (PSPTGFQHIGG) is the 'HIGH' region element. The short motif at 251 to 255 (KLSKR) is the 'KMSKS' region element. ATP is bound at residue Lys254.

This sequence belongs to the class-I aminoacyl-tRNA synthetase family. Glutamate--tRNA ligase type 1 subfamily. Monomer.

It localises to the cytoplasm. The catalysed reaction is tRNA(Glu) + L-glutamate + ATP = L-glutamyl-tRNA(Glu) + AMP + diphosphate. Catalyzes the attachment of glutamate to tRNA(Glu) in a two-step reaction: glutamate is first activated by ATP to form Glu-AMP and then transferred to the acceptor end of tRNA(Glu). The protein is Glutamate--tRNA ligase of Treponema denticola (strain ATCC 35405 / DSM 14222 / CIP 103919 / JCM 8153 / KCTC 15104).